The chain runs to 199 residues: Nitrile hydratase subunit alpha (199 aa).

4 residues coordinate Fe(3+): Cys-102, Cys-105, Ser-106, and Cys-107. Cys-105 carries the post-translational modification Cysteine sulfinic acid (-SO2H). Cys-107 is subject to Cysteine sulfenic acid (-SOH).

Belongs to the nitrile hydratase subunit alpha family. As to quaternary structure, heterodimer of an alpha and a beta chain. Fe(3+) serves as cofactor. In terms of processing, oxidation on Cys-105 is essential for the activity. Post-translationally, oxidation on Cys-107 stabilizes the Fe-NO ligand coordinated in the inactive form.

The enzyme catalyses an aliphatic primary amide = an aliphatic nitrile + H2O. Its activity is regulated as follows. Inactivated by oxidation of Cys-107 to a sulfenic acid. In terms of biological role, NHase catalyzes the hydration of various nitrile compounds to the corresponding amides. Industrial production of acrylamide is now being developed using some of the enzymes of this class. In Rhodococcus sp, this protein is Nitrile hydratase subunit alpha (nthA).